We begin with the raw amino-acid sequence, 333 residues long: Autoinducer 2 import system permease protein LsrD (333 aa).

Transmembrane regions (helical) follow at residues 7–27 (YGWE…FGIA), 45–65 (ICIG…GIDI), 70–90 (TIGL…PMAA), 91–111 (AIPL…ALIL), 119–139 (VITL…SGIF), 162–182 (LLGL…FWLF), 212–232 (TLYF…IVLV), 240–260 (SDLG…GGAN), 261–281 (IYGG…IGYL), and 288–308 (IGIP…IAVV).

The protein belongs to the binding-protein-dependent transport system permease family. AraH/RbsC subfamily. The complex is composed of two ATP-binding proteins (LsrA), two transmembrane proteins (LsrC and LsrD) and a solute-binding protein (LsrB).

Its subcellular location is the cell inner membrane. In terms of biological role, part of the ABC transporter complex LsrABCD involved in autoinducer 2 (AI-2) import. Probably responsible for the translocation of the substrate across the membrane. This Photorhabdus temperata protein is Autoinducer 2 import system permease protein LsrD (lsrD).